A 424-amino-acid polypeptide reads, in one-letter code: Histidine--tRNA ligase (424 aa).

Belongs to the class-II aminoacyl-tRNA synthetase family. In terms of assembly, homodimer.

Its subcellular location is the cytoplasm. The enzyme catalyses tRNA(His) + L-histidine + ATP = L-histidyl-tRNA(His) + AMP + diphosphate + H(+). In Salmonella agona (strain SL483), this protein is Histidine--tRNA ligase.